Here is a 942-residue protein sequence, read N- to C-terminus: Protein NLP1 (942 aa).

Residues methionine 1–proline 11 show a composition bias toward pro residues. Disordered regions lie at residues methionine 1 to alanine 32, threonine 77 to alanine 106, valine 594 to glutamate 620, phenylalanine 723 to serine 753, and serine 759 to leucine 778. Positions methionine 21 to alanine 32 are enriched in gly residues. A compositionally biased stretch (polar residues) spans asparagine 597–aspartate 609. The RWP-RK domain maps to aspartate 609 to threonine 690. The span at serine 743–serine 753 shows a compositional bias: low complexity. Polar residues predominate over residues valine 765–serine 774. Positions serine 844–serine 927 constitute a PB1 domain.

The protein localises to the nucleus. In terms of biological role, probable transcription factor. In Oryza sativa subsp. japonica (Rice), this protein is Protein NLP1 (NLP1).